The chain runs to 483 residues: General transcription factor IIH subunit 4 (483 aa).

Positions 93-117 are disordered; it reads PQQQQSSQQSSSQQQQQQQQQQQQT. Low complexity predominate over residues 94–116; sequence QQQQSSQQSSSQQQQQQQQQQQQ.

The protein belongs to the TFB2 family. Component of the 7-subunit TFIIH core complex composed of XPB/repB, XPD/repD, gtf2h1, gtf2h2, gtf2h3, gtf2h4 and gtf2h5, which is active in NER. The core complex associates with the 3-subunit CDK-activating kinase (CAK) module composed of cycH/cyclin H, cdk7 and mnat1 to form the 10-subunit holoenzyme (holo-TFIIH) active in transcription.

The protein resides in the nucleus. In terms of biological role, component of the general transcription and DNA repair factor IIH (TFIIH) core complex, which is involved in general and transcription-coupled nucleotide excision repair (NER) of damaged DNA and, when complexed to CAK, in RNA transcription by RNA polymerase II. In NER, TFIIH acts by opening DNA around the lesion to allow the excision of the damaged oligonucleotide and its replacement by a new DNA fragment. In transcription, TFIIH has an essential role in transcription initiation. When the pre-initiation complex (PIC) has been established, TFIIH is required for promoter opening and promoter escape. Phosphorylation of the C-terminal tail (CTD) of the largest subunit of RNA polymerase II by the kinase module CAK controls the initiation of transcription. The chain is General transcription factor IIH subunit 4 (gtf2h4) from Dictyostelium discoideum (Social amoeba).